The following is a 290-amino-acid chain: Shikimate dehydrogenase (NADP(+)) (290 aa).

Residues 20–22 (SLS) and threonine 67 contribute to the shikimate site. The active-site Proton acceptor is the lysine 71. Residues asparagine 92 and aspartate 107 each contribute to the shikimate site. NADP(+) contacts are provided by residues 130–134 (GAGGA) and leucine 227. Tyrosine 229 is a binding site for shikimate. Position 250 (glycine 250) interacts with NADP(+).

Belongs to the shikimate dehydrogenase family. In terms of assembly, homodimer.

It catalyses the reaction shikimate + NADP(+) = 3-dehydroshikimate + NADPH + H(+). It functions in the pathway metabolic intermediate biosynthesis; chorismate biosynthesis; chorismate from D-erythrose 4-phosphate and phosphoenolpyruvate: step 4/7. Its function is as follows. Involved in the biosynthesis of the chorismate, which leads to the biosynthesis of aromatic amino acids. Catalyzes the reversible NADPH linked reduction of 3-dehydroshikimate (DHSA) to yield shikimate (SA). The chain is Shikimate dehydrogenase (NADP(+)) from Syntrophomonas wolfei subsp. wolfei (strain DSM 2245B / Goettingen).